Consider the following 716-residue polypeptide: Interleukin-31 receptor subunit alpha (716 aa).

A signal peptide spans 1-18; it reads MWTLALWAFSFLCKFSLA. The Extracellular segment spans residues 19-499; the sequence is VLPTKPENIS…TNGVRINFKT (481 aa). 5 Fibronectin type-III domains span residues 23 to 115, 117 to 211, 213 to 304, 305 to 403, and 408 to 502; these read KPEN…IAKT, PPII…TMEE, PHVL…ILRI, PDVH…QAYA, and PLKG…TLSI. 3 N-linked (GlcNAc...) asparagine glycosylation sites follow: N36, N48, and N64. N382 carries N-linked (GlcNAc...) asparagine glycosylation. A helical membrane pass occupies residues 500-520; it reads LSISVFEIVLLTSLVGGGLLL. Residues 521–716 are Cytoplasmic-facing; sequence LSIKTVTFGL…NIPEHSKGEV (196 aa). Disordered regions lie at residues 622 to 641 and 648 to 696; these read EYVT…FKEP and ASED…LKNS. Residues 670-679 show a composition bias toward polar residues; that stretch reads QPSSSCQSPG.

This sequence belongs to the type I cytokine receptor family. Type 2 subfamily. In terms of assembly, heterodimer with OSMR. Interacts with JAK1 and STAT3. In terms of processing, N-glycosylated. As to expression, expressed in a subset of dorsal root ganglia neurons. Expressed in spinal cord and trigeminal ganglion (at protein level). Expressed in skin, testis, bone marrow and thymus.

The protein resides in the cell membrane. Its subcellular location is the presynaptic cell membrane. The protein localises to the cell projection. It localises to the axon. Its function is as follows. Associates with OSMR to form the interleukin-31 receptor which activates STAT3 and to a lower extent STAT1 and STAT5. May function in skin immunity. Mediates IL31-induced itch, probably in a manner dependent on cation channels TRPA1 and TRPV1. Positively regulates numbers and cycling status of immature subsets of myeloid progenitor cells in bone marrow in vivo and enhances myeloid progenitor cell survival in vitro. The polypeptide is Interleukin-31 receptor subunit alpha (Il31ra) (Mus musculus (Mouse)).